The primary structure comprises 87 residues: Small ribosomal subunit protein bS20 (87 aa).

The tract at residues 1–26 (MANIKSAKKRAVQSEKARKHNASRRS) is disordered.

It belongs to the bacterial ribosomal protein bS20 family.

Its function is as follows. Binds directly to 16S ribosomal RNA. The polypeptide is Small ribosomal subunit protein bS20 (Salmonella typhi).